The following is a 282-amino-acid chain: Para-Rep C2 (282 aa).

Residues Met-1–Pro-99 form the CRESS-DNA virus Rep endonuclease domain. An RCR-1 motif is present at residues Cys-7–Leu-10. Residues Glu-38 and His-47 each coordinate a divalent metal cation. The RCR-2 signature appears at His-47 to Gln-49. The Nuclear localization signal motif lies at Lys-56 to Lys-77. Tyr-86 acts as the For DNA cleavage activity in catalysis. The short motif at Tyr-86–Lys-89 is the RCR-3 element. A Nuclear localization signal motif is present at residues Pro-99–Asn-105. ATP is bound at residue Gly-174 to Ser-182.

Belongs to the nanoviridea/circoviridae replication-associated protein family. As to quaternary structure, homooligomer (Potential). Rep binds to repeated DNA motifs (iterons). Requires Mg(2+) as cofactor. It depends on Mn(2+) as a cofactor.

The protein localises to the host nucleus. The catalysed reaction is ATP + H2O = ADP + phosphate + H(+). Its function is as follows. Initiates and terminates the replication only of its own subviral DNA molecule. The closed circular ssDNA genome is first converted to a superhelical dsDNA. Rep binds a specific hairpin at the genome origin of replication. Introduces an endonucleolytic nick within the intergenic region of the genome, thereby initiating the rolling circle replication (RCR). Following cleavage, binds covalently to the 5'-phosphate of DNA as a tyrosyl ester. The cleavage gives rise to a free 3'-OH that serves as a primer for the cellular DNA polymerase. The polymerase synthesizes the (+) strand DNA by rolling circle mechanism. After one round of replication, a Rep-catalyzed nucleotidyl transfer reaction releases a circular single-stranded virus genome, thereby terminating the replication. Displays origin-specific DNA cleavage, nucleotidyl transferase, ATPase and helicase activities. This Milk vetch dwarf C2 alphasatellite (MVDC2A) protein is Para-Rep C2 (C2).